A 431-amino-acid polypeptide reads, in one-letter code: Serine--tRNA ligase (431 aa).

L-serine is bound at residue 236 to 238 (TAE). Position 267–269 (267–269 (RSE)) interacts with ATP. Glu290 lines the L-serine pocket. 354–357 (EISS) is a binding site for ATP. Residue Ser389 coordinates L-serine.

The protein belongs to the class-II aminoacyl-tRNA synthetase family. Type-1 seryl-tRNA synthetase subfamily. Homodimer. The tRNA molecule binds across the dimer.

The protein resides in the cytoplasm. It catalyses the reaction tRNA(Ser) + L-serine + ATP = L-seryl-tRNA(Ser) + AMP + diphosphate + H(+). The enzyme catalyses tRNA(Sec) + L-serine + ATP = L-seryl-tRNA(Sec) + AMP + diphosphate + H(+). The protein operates within aminoacyl-tRNA biosynthesis; selenocysteinyl-tRNA(Sec) biosynthesis; L-seryl-tRNA(Sec) from L-serine and tRNA(Sec): step 1/1. In terms of biological role, catalyzes the attachment of serine to tRNA(Ser). Is also able to aminoacylate tRNA(Sec) with serine, to form the misacylated tRNA L-seryl-tRNA(Sec), which will be further converted into selenocysteinyl-tRNA(Sec). The polypeptide is Serine--tRNA ligase (Herminiimonas arsenicoxydans).